The following is a 189-amino-acid chain: Phosphoheptose isomerase (189 aa).

Positions 34–189 (AVETLKNGNK…CQIIDNELSH (156 aa)) constitute an SIS domain. Residue 49–51 (NGG) coordinates substrate. Residues His58 and Glu62 each contribute to the Zn(2+) site. Residues Glu62, 91 to 92 (ND), 117 to 119 (STS), Ser122, and Gln169 each bind substrate. 2 residues coordinate Zn(2+): Gln169 and His177.

Belongs to the SIS family. GmhA subfamily. Homotetramer. Zn(2+) serves as cofactor.

The protein localises to the cytoplasm. The catalysed reaction is 2 D-sedoheptulose 7-phosphate = D-glycero-alpha-D-manno-heptose 7-phosphate + D-glycero-beta-D-manno-heptose 7-phosphate. Its pathway is carbohydrate biosynthesis; D-glycero-D-manno-heptose 7-phosphate biosynthesis; D-glycero-alpha-D-manno-heptose 7-phosphate and D-glycero-beta-D-manno-heptose 7-phosphate from sedoheptulose 7-phosphate: step 1/1. Functionally, catalyzes the isomerization of sedoheptulose 7-phosphate in D-glycero-D-manno-heptose 7-phosphate. This chain is Phosphoheptose isomerase, found in Aliarcobacter butzleri (strain RM4018) (Arcobacter butzleri).